Consider the following 566-residue polypeptide: Cytokine-like nuclear factor N-PAC (566 aa).

The 62-residue stretch at 9–70 folds into the PWWP domain; it reads VNDLVWAKMK…ETQIKPYLQF (62 aa). Disordered regions lie at residues 127–147 and 206–234; these read VASGTEESGAEDGASVNNTTT and MLDDGVSGAPSPKRKKKLLNDSGELSSLD. Positions 274 to 566 are dehydrogenase domain; it reads RNIKASQLKF…ASAVYVRARF (293 aa). NAD(+) is bound by residues 284 to 298 and Lys-518; that span reads GFLGLGVMGCGIVKN.

This sequence belongs to the HIBADH-related family. NP60 subfamily. In terms of assembly, binds to mononucleosomes. Interacts with male-specific lethal (MSL) histone acetyltransferase complex at least composed of mof, msl-1, msl-2 and msl-3.

Its subcellular location is the chromosome. In terms of biological role, may have oxidoreductase activity. The protein is Cytokine-like nuclear factor N-PAC of Anopheles gambiae (African malaria mosquito).